The chain runs to 176 residues: Probable inosine/xanthosine triphosphatase (176 aa).

Asp-36 provides a ligand contact to Mg(2+).

It belongs to the YjjX NTPase family. In terms of assembly, homodimer. The cofactor is Mg(2+). Requires Mn(2+) as cofactor.

The catalysed reaction is XTP + H2O = XDP + phosphate + H(+). The enzyme catalyses ITP + H2O = IDP + phosphate + H(+). Its function is as follows. Phosphatase that hydrolyzes non-canonical purine nucleotides such as XTP and ITP to their respective diphosphate derivatives. Probably excludes non-canonical purines from DNA/RNA precursor pool, thus preventing their incorporation into DNA/RNA and avoiding chromosomal lesions. This Saccharolobus islandicus (strain M.14.25 / Kamchatka #1) (Sulfolobus islandicus) protein is Probable inosine/xanthosine triphosphatase.